The following is a 194-amino-acid chain: ATP-dependent Clp protease proteolytic subunit (194 aa).

The active-site Nucleophile is the Ser-98. The active site involves His-123.

It belongs to the peptidase S14 family. In terms of assembly, fourteen ClpP subunits assemble into 2 heptameric rings which stack back to back to give a disk-like structure with a central cavity, resembling the structure of eukaryotic proteasomes.

The protein localises to the cytoplasm. It catalyses the reaction Hydrolysis of proteins to small peptides in the presence of ATP and magnesium. alpha-casein is the usual test substrate. In the absence of ATP, only oligopeptides shorter than five residues are hydrolyzed (such as succinyl-Leu-Tyr-|-NHMec, and Leu-Tyr-Leu-|-Tyr-Trp, in which cleavage of the -Tyr-|-Leu- and -Tyr-|-Trp bonds also occurs).. In terms of biological role, cleaves peptides in various proteins in a process that requires ATP hydrolysis. Has a chymotrypsin-like activity. Plays a major role in the degradation of misfolded proteins. This is ATP-dependent Clp protease proteolytic subunit from Sodalis glossinidius (strain morsitans).